Consider the following 173-residue polypeptide: Adenine phosphoribosyltransferase (173 aa).

This sequence belongs to the purine/pyrimidine phosphoribosyltransferase family. As to quaternary structure, homodimer.

It is found in the cytoplasm. It carries out the reaction AMP + diphosphate = 5-phospho-alpha-D-ribose 1-diphosphate + adenine. It functions in the pathway purine metabolism; AMP biosynthesis via salvage pathway; AMP from adenine: step 1/1. Catalyzes a salvage reaction resulting in the formation of AMP, that is energically less costly than de novo synthesis. In Thermoanaerobacter sp. (strain X514), this protein is Adenine phosphoribosyltransferase.